Here is a 74-residue protein sequence, read N- to C-terminus: Large ribosomal subunit protein uL29 (74 aa).

It belongs to the universal ribosomal protein uL29 family.

The chain is Large ribosomal subunit protein uL29 (rpmC) from Streptomyces coelicolor (strain ATCC BAA-471 / A3(2) / M145).